The chain runs to 307 residues: MKLWFSTLKLKKAAAVLLFSCVALAGCANNQTNASQPAEKNEKTEMKDDFAKLEEQFDAKLGIFALDTGTNRTVAYRPDERFAFASTIKALTVGVLLQQKSIEDLNQRITYTRDDLVNYNPITEKHVDTGMTLKELADASLRYSDNAAQNLILKQIGGPESLKKELRKIGDEVTNPERFEPELNEVNPGETQDTSTARALVTSLRAFALEDKLPSEKRELLIDWMKRNTTGDALIRAGVPDGWEVADKTGAASYGTRNDIAIIWPPKGDPVVLAVLSSRDKKDAKYDDKLIAEATKVVMKALNMNGK.

A signal peptide spans 1 to 26 (MKLWFSTLKLKKAAAVLLFSCVALAG). Residue Cys27 is the site of N-palmitoyl cysteine attachment. Cys27 carries S-diacylglycerol cysteine lipidation. Ser86 acts as the Acyl-ester intermediate in catalysis. The active-site Proton acceptor is Glu182. 248–250 (KTG) provides a ligand contact to substrate.

It belongs to the class-A beta-lactamase family. Post-translationally, large exopenicillinase is the primary secretion product; it can be converted to small exopenicillinase.

The protein localises to the cell membrane. It carries out the reaction a beta-lactam + H2O = a substituted beta-amino acid. This is Beta-lactamase (penP) from Bacillus licheniformis.